The following is a 237-amino-acid chain: Phosphoribosylaminoimidazole-succinocarboxamide synthase (237 aa).

The protein belongs to the SAICAR synthetase family.

The enzyme catalyses 5-amino-1-(5-phospho-D-ribosyl)imidazole-4-carboxylate + L-aspartate + ATP = (2S)-2-[5-amino-1-(5-phospho-beta-D-ribosyl)imidazole-4-carboxamido]succinate + ADP + phosphate + 2 H(+). The protein operates within purine metabolism; IMP biosynthesis via de novo pathway; 5-amino-1-(5-phospho-D-ribosyl)imidazole-4-carboxamide from 5-amino-1-(5-phospho-D-ribosyl)imidazole-4-carboxylate: step 1/2. The chain is Phosphoribosylaminoimidazole-succinocarboxamide synthase from Listeria monocytogenes serovar 1/2a (strain ATCC BAA-679 / EGD-e).